Consider the following 248-residue polypeptide: MSLFPSLPLLLLSMVAASYSETVTCEDAQKTCPAVIACSSPGINGFPGKDGRDGTKGEKGEPGQGLRGLQGPPGKLGPPGNPGPSGSPGPKGQKGDPGKSPDGDSSLAASERKALQTEMARIKKWLTFSLGKQVGNKFFLTNGEIMTFEKVKALCVKFQASVATPRNAAENGAIQNLIKEEAFLGITDEKTEGQFVDLTGNRLTYTNWNEGEPNNAGSDEDCVLLLKNGQWNDVPCSTSHLAVCEFPI.

Positions Met1–Ser20 are cleaved as a signal peptide. One can recognise a Collagen-like domain in the interval Gly42–Lys99. Residues Ile43 to Lys113 form a disordered region. A Hydroxyproline modification is found at Pro47. The segment covering Lys49–Glu61 has biased composition (basic and acidic residues). A hydroxyproline mark is found at Pro73, Pro79, Pro82, and Pro88. The span at Lys75–Ser87 shows a compositional bias: pro residues. The segment covering Gln93–Asp102 has biased composition (basic and acidic residues). Residues Arg112–Leu130 are a coiled coil. The region spanning Val134–Glu245 is the C-type lectin domain. 2 disulfide bridges follow: Cys155-Cys244 and Cys222-Cys236.

Oligomeric complex of 3 or more homotrimers. Interacts with MASP1 and MASP2. Interacts with MEP1A and MEP1B and may inhibit their catalytic activity. Interacts with CR1 (via Sushi 24 and Sushi 25 domains). In terms of assembly, (Microbial infection) Interacts with SARS coronavirus-2/SARS-CoV-2 Spike glycoprotein homotrimer; the interaction is calcium-dependent and modulated by Spike glycoprotein glycosylation state. As to expression, plasma protein produced mainly in the liver.

It localises to the secreted. Its function is as follows. Calcium-dependent lectin involved in innate immune defense. Binds mannose, fucose and N-acetylglucosamine on different microorganisms and activates the lectin complement pathway. Binds to late apoptotic cells, as well as to apoptotic blebs and to necrotic cells, but not to early apoptotic cells, facilitating their uptake by macrophages. May bind DNA. Upon SARS coronavirus-2/SARS-CoV-2 infection, activates the complement lectin pathway which leads to the inhibition SARS-CoV-2 infection and a reduction of the induced inflammatory response. This Homo sapiens (Human) protein is Mannose-binding protein C.